The chain runs to 274 residues: Triosephosphate isomerase (274 aa).

13–15 (NWK) is a substrate binding site. Residue His-98 is the Electrophile of the active site. Catalysis depends on Glu-170, which acts as the Proton acceptor. Residues Gly-176 and Ser-216 each coordinate substrate.

Belongs to the triosephosphate isomerase family. In terms of assembly, homodimer.

Its subcellular location is the cytoplasm. The catalysed reaction is D-glyceraldehyde 3-phosphate = dihydroxyacetone phosphate. It functions in the pathway carbohydrate biosynthesis; gluconeogenesis. The protein operates within carbohydrate degradation; glycolysis; D-glyceraldehyde 3-phosphate from glycerone phosphate: step 1/1. Involved in the gluconeogenesis. Catalyzes stereospecifically the conversion of dihydroxyacetone phosphate (DHAP) to D-glyceraldehyde-3-phosphate (G3P). The protein is Triosephosphate isomerase of Aster yellows witches'-broom phytoplasma (strain AYWB).